Here is a 40-residue protein sequence, read N- to C-terminus: Chitin-binding protein 4 (40 aa).

In terms of processing, N-glycosylated.

Chitin-binding protein. Has antifungal activity against C.krusei, C.albicans, C.tropicalis and C.parapsilosis. Has antinociceptive and anti-inflammatory activity in mice. This Moringa oleifera (Horseradish tree) protein is Chitin-binding protein 4.